We begin with the raw amino-acid sequence, 168 residues long: Protein GRE1 (168 aa).

A disordered region spans residues 1 to 168; it reads MSNLLNKFAD…DDDSGNQGVW (168 aa). Composition is skewed to basic and acidic residues over residues 8-20 and 27-43; these read FADK…HDER and DQTR…REFR. Composition is skewed to polar residues over residues 56 to 81 and 120 to 144; these read NQGN…GNDF and TSGQ…SNIG.

It localises to the cytoplasm. The sequence is that of Protein GRE1 (GRE1) from Saccharomyces cerevisiae (strain ATCC 204508 / S288c) (Baker's yeast).